We begin with the raw amino-acid sequence, 68 residues long: Large ribosomal subunit protein uL29 (68 aa).

The protein belongs to the universal ribosomal protein uL29 family.

This Streptococcus sanguinis (strain SK36) protein is Large ribosomal subunit protein uL29.